A 324-amino-acid polypeptide reads, in one-letter code: Zinc transporter ZIP1 (324 aa).

At 1-30 the chain is on the extracellular side; the sequence is MGPWGEPELLVWRPEAVASEPPVPVGLEVK. Residues 31–51 traverse the membrane as a helical segment; sequence LGALVLLLVLTLLCSLVPICV. The Cytoplasmic portion of the chain corresponds to 52–68; it reads LRRPGANHEGSASRQKA. A helical transmembrane segment spans residues 69 to 89; that stretch reads LSLVSCFAGGVFLATCLLDLL. Residues 90 to 104 are Extracellular-facing; the sequence is PDYLAAIDEALAALH. A helical membrane pass occupies residues 105-125; it reads VTLQFPLQEFILAMGFFLVLV. The Cytoplasmic portion of the chain corresponds to 126–179; sequence MEQITLAYKEQSGPSPLEETRALLGTVNGGPQHWHDGPGVPQASGAPATPSALR. A helical membrane pass occupies residues 180 to 200; sequence ACVLVFSLALHSVFEGLAVGL. The Extracellular portion of the chain corresponds to 201–206; the sequence is QRDRAR. The helical transmembrane segment at 207–227 threads the bilayer; it reads AMELCLALLLHKGILAVSLSL. Topologically, residues 228-237 are cytoplasmic; the sequence is RLLQSHLRAQ. The chain crosses the membrane as a helical span at residues 238–258; sequence VVAGCGILFSCMTPLGIGLGA. The Extracellular portion of the chain corresponds to 259 to 272; the sequence is ALAESAGPLHQLAQ. A helical membrane pass occupies residues 273-293; that stretch reads SVLEGMAAGTFLYITFLEILP. Residues 294–303 lie on the Cytoplasmic side of the membrane; that stretch reads QELASSEQRI. Residues 304-324 form a helical membrane-spanning segment; that stretch reads LKVILLLAGFALLTGLLFIQI.

The protein belongs to the ZIP transporter (TC 2.A.5) family. In terms of tissue distribution, ubiquitous. Expressed in most adult and fetal tissues including the epidermis.

It is found in the cell membrane. The protein localises to the endoplasmic reticulum membrane. It carries out the reaction Zn(2+)(in) = Zn(2+)(out). With respect to regulation, inhibited by Ni(2+) ions. Fe(2+) ions do not inhibit zinc uptake. Its function is as follows. Transporter for the divalent cation Zn(2+). Mediates the influx of Zn(2+) into cells from extracellular space. Functions as the major importer of zinc from circulating blood plasma into prostate cells. This is Zinc transporter ZIP1 from Homo sapiens (Human).